Consider the following 232-residue polypeptide: E3 ubiquitin-protein ligase RNF125 (232 aa).

A compositionally biased stretch (polar residues) spans 1–10; sequence MGSVLSTDSG. Residues 1 to 23 form a disordered region; it reads MGSVLSTDSGKSAPASATARALE. A lipid anchor (N-myristoyl glycine) is attached at G2. Positions 37 and 40 each coordinate Zn(2+). The segment at 37–76 adopts an RING-type zinc-finger fold; it reads CAVCLEVLHQPVRTRCGHVFCRSCIATSLKNNKWTCPYCR. The interaction with the C2HC RNF-type zinc finger stretch occupies residues 43-45; that stretch reads VLH. Positions 52, 54, 57, 60, 72, 75, 100, and 103 each coordinate Zn(2+). The C2HC RNF-type zinc-finger motif lies at 100 to 119; sequence CAECDTLVCLSEMRAHIRTC. Residues 109-113 are interaction with the RING-type zinc finger; the sequence is LSEMR. H115 and C119 together coordinate Zn(2+). A linker region region spans residues 120-128; the sequence is QKYIDKYGP. Residues 210–224 are required for interaction with ubiquitin and for autoubiquitination; sequence EEALIRRVLDRSLLE.

As to quaternary structure, interacts with UBE2D1. Interacts with VCP/p97; leading to recruit RNF125 to RIGI and promote ubiquitination of RIGI. Post-translationally, autoubiquitinated, leading to its subsequent proteasomal degradation. In terms of tissue distribution, predominantly expressed in lymphoid tissues, including bone marrow, spleen and thymus. Also weakly expressed in other tissues. Predominant in the CD4(+) and CD8(+) T-cells, suggesting that it is preferentially confined to T-cells.

It is found in the golgi apparatus membrane. It carries out the reaction S-ubiquitinyl-[E2 ubiquitin-conjugating enzyme]-L-cysteine + [acceptor protein]-L-lysine = [E2 ubiquitin-conjugating enzyme]-L-cysteine + N(6)-ubiquitinyl-[acceptor protein]-L-lysine.. It participates in protein modification; protein ubiquitination. Its function is as follows. E3 ubiquitin-protein ligase that mediates ubiquitination and subsequent proteasomal degradation of target proteins, such as RIGI, MAVS/IPS1, IFIH1/MDA5, JAK1 and p53/TP53. Acts as a negative regulator of type I interferon production by mediating ubiquitination of RIGI at 'Lys-181', leading to RIGI degradation. Mediates ubiquitination and subsequent degradation of p53/TP53. Mediates ubiquitination and subsequent degradation of JAK1. Acts as a positive regulator of T-cell activation. The chain is E3 ubiquitin-protein ligase RNF125 from Homo sapiens (Human).